The primary structure comprises 123 residues: MAEKKKSVSIKKGDTVKVIAGKDKGAEGRVIQVLREEQRVIVEGVNRVKRHTKVVNQGGRAGTTGGIITAEAPIHVSNVMLVEGGGVTRIGFRRDEVTKRRPDGSTYKAERSVRISRKTGKEI.

The disordered stretch occupies residues 100 to 123 (RRPDGSTYKAERSVRISRKTGKEI).

The protein belongs to the universal ribosomal protein uL24 family. As to quaternary structure, part of the 50S ribosomal subunit.

Its function is as follows. One of two assembly initiator proteins, it binds directly to the 5'-end of the 23S rRNA, where it nucleates assembly of the 50S subunit. In terms of biological role, one of the proteins that surrounds the polypeptide exit tunnel on the outside of the subunit. This Nocardioides sp. (strain ATCC BAA-499 / JS614) protein is Large ribosomal subunit protein uL24.